A 310-amino-acid polypeptide reads, in one-letter code: Transcription factor RAX3 (310 aa).

2 consecutive HTH myb-type domains span residues 9 to 62 (KANV…LNYL) and 63 to 117 (RPNI…KKKL). 2 consecutive DNA-binding regions (H-T-H motif) follow at residues 38 to 62 (WIAL…LNYL) and 90 to 113 (WSII…NTRL).

Ubiquitous.

The protein resides in the nucleus. Functionally, transcription activator. Positively regulates axillary meristems (AMs) formation and development, especially during inflorescence. The sequence is that of Transcription factor RAX3 (RAX3) from Arabidopsis thaliana (Mouse-ear cress).